The chain runs to 490 residues: Scarecrow-like transcription factor PAT1 (490 aa).

Positions 110 to 490 constitute a GRAS domain; sequence TLEAISRRDL…RDLVASCAWK (381 aa). Positions 117 to 178 are leucine repeat I (LRI); it reads RDLRADLVSC…AQLASSGSSI (62 aa). Residues 197-262 form a VHIID region; the sequence is MHILYEVCPY…GGPPRIRITG (66 aa). The short motif at 228–232 is the VHIID element; the sequence is VHIID. The segment at 278–310 is leucine repeat II (LRII); it reads IVGNRLAKLAKQFNVPFEFNSVSVSVSEVKPKN. The PFYRE stretch occupies residues 319 to 413; the sequence is LAVNFAFVLH…QHCLARDVVN (95 aa). The SAW stretch occupies residues 416 to 490; it reads ACEGADRVER…RDLVASCAWK (75 aa).

It belongs to the GRAS family.

Its subcellular location is the cytoplasm. Functionally, probable transcription factor involved in phytochrome A (phyA) signal transduction. This is Scarecrow-like transcription factor PAT1 (PAT1) from Arabidopsis thaliana (Mouse-ear cress).